The primary structure comprises 542 residues: Dihydropyrimidinase (542 aa).

His-62, His-64, and Lys-167 together coordinate Zn(2+). Lys-167 carries the post-translational modification N6-carboxylysine. Tyr-172 lines the substrate pocket. Zn(2+) is bound by residues His-199 and His-255. Ser-331 provides a ligand contact to substrate. A Zn(2+)-binding site is contributed by Asp-358. A substrate-binding site is contributed by Asn-392.

This sequence belongs to the metallo-dependent hydrolases superfamily. Hydantoinase/dihydropyrimidinase family. In terms of assembly, homotetramer. Zn(2+) serves as cofactor. In terms of processing, carboxylation allows a single lysine to coordinate two zinc ions.

It catalyses the reaction 5,6-dihydrouracil + H2O = 3-(carbamoylamino)propanoate + H(+). Functionally, catalyzes the second step of the reductive pyrimidine degradation, the reversible hydrolytic ring opening of dihydropyrimidines. Can catalyze the ring opening of 5,6-dihydrouracil to N-carbamyl-alanine and of 5,6-dihydrothymine to N-carbamyl-amino isobutyrate. The polypeptide is Dihydropyrimidinase (PYD2) (Lachancea kluyveri (strain ATCC 58438 / CBS 3082 / BCRC 21498 / NBRC 1685 / JCM 7257 / NCYC 543 / NRRL Y-12651) (Yeast)).